A 294-amino-acid chain; its full sequence is Putative lipid kinase SP_1045 (294 aa).

The DAGKc domain occupies methionine 1–tyrosine 131. ATP-binding positions include asparagine 9–glycine 13, threonine 40, glycine 66–glutamate 72, and threonine 93. Residues aspartate 212 and tyrosine 214 each contribute to the Mg(2+) site. Residue aspartate 269 is the Proton acceptor of the active site.

This sequence belongs to the diacylglycerol/lipid kinase family. It depends on Mg(2+) as a cofactor.

Functionally, may catalyze the ATP-dependent phosphorylation of lipids other than diacylglycerol (DAG). In fact, is not able to exhibit diacylglycerol kinase activity in vitro. The protein is Putative lipid kinase SP_1045 of Streptococcus pneumoniae serotype 4 (strain ATCC BAA-334 / TIGR4).